A 240-amino-acid chain; its full sequence is tRNA (guanine-N(1)-)-methyltransferase (240 aa).

S-adenosyl-L-methionine contacts are provided by residues glycine 108 and 127-132 (LGDFIL).

Belongs to the RNA methyltransferase TrmD family. In terms of assembly, homodimer.

The protein resides in the cytoplasm. It carries out the reaction guanosine(37) in tRNA + S-adenosyl-L-methionine = N(1)-methylguanosine(37) in tRNA + S-adenosyl-L-homocysteine + H(+). Specifically methylates guanosine-37 in various tRNAs. This is tRNA (guanine-N(1)-)-methyltransferase from Streptococcus mutans serotype c (strain ATCC 700610 / UA159).